We begin with the raw amino-acid sequence, 620 residues long: Chaperone protein HtpG (620 aa).

The a; substrate-binding stretch occupies residues 1 to 334 (MTTTDTAPQS…SEDLPLNLSR (334 aa)). A b region spans residues 335–548 (EMLQNNPQLA…GLGPDRALER (214 aa)). The interval 549-620 (MLAQQNRGAA…RLNRLVLRAL (72 aa)) is c.

Belongs to the heat shock protein 90 family. Homodimer.

It localises to the cytoplasm. Molecular chaperone. Has ATPase activity. This is Chaperone protein HtpG from Rhodopseudomonas palustris (strain BisB18).